The primary structure comprises 182 residues: Probable RNA 2'-phosphotransferase (182 aa).

The protein belongs to the KptA/TPT1 family.

In terms of biological role, removes the 2'-phosphate from RNA via an intermediate in which the phosphate is ADP-ribosylated by NAD followed by a presumed transesterification to release the RNA and generate ADP-ribose 1''-2''-cyclic phosphate (APPR&gt;P). May function as an ADP-ribosylase. The polypeptide is Probable RNA 2'-phosphotransferase (Flavobacterium johnsoniae (strain ATCC 17061 / DSM 2064 / JCM 8514 / BCRC 14874 / CCUG 350202 / NBRC 14942 / NCIMB 11054 / UW101) (Cytophaga johnsonae)).